The chain runs to 63 residues: Cytochrome c oxidase subunit 7C, mitochondrial (63 aa).

A mitochondrion-targeting transit peptide spans 1 to 16 (MLGHSIRRFTTSVVRR). Over 17-33 (SHYEEGPGKNLPFSVEN) the chain is Mitochondrial matrix. N6-acetyllysine; alternate is present on K25. K25 is modified (N6-succinyllysine; alternate). Residues 34–60 (KWTLLVKMCLFFGSAFSVPFLIVRHQL) traverse the membrane as a helical segment. Residues 61 to 63 (LKQ) are Mitochondrial intermembrane-facing.

This sequence belongs to the cytochrome c oxidase VIIc family. Component of the cytochrome c oxidase (complex IV, CIV), a multisubunit enzyme composed of 14 subunits. The complex is composed of a catalytic core of 3 subunits MT-CO1, MT-CO2 and MT-CO3, encoded in the mitochondrial DNA, and 11 supernumerary subunits COX4I, COX5A, COX5B, COX6A, COX6B, COX6C, COX7A, COX7B, COX7C, COX8 and NDUFA4, which are encoded in the nuclear genome. The complex exists as a monomer or a dimer and forms supercomplexes (SCs) in the inner mitochondrial membrane with NADH-ubiquinone oxidoreductase (complex I, CI) and ubiquinol-cytochrome c oxidoreductase (cytochrome b-c1 complex, complex III, CIII), resulting in different assemblies (supercomplex SCI(1)III(2)IV(1) and megacomplex MCI(2)III(2)IV(2)). Interacts with RAB5IF.

The protein resides in the mitochondrion inner membrane. Its pathway is energy metabolism; oxidative phosphorylation. Functionally, component of the cytochrome c oxidase, the last enzyme in the mitochondrial electron transport chain which drives oxidative phosphorylation. The respiratory chain contains 3 multisubunit complexes succinate dehydrogenase (complex II, CII), ubiquinol-cytochrome c oxidoreductase (cytochrome b-c1 complex, complex III, CIII) and cytochrome c oxidase (complex IV, CIV), that cooperate to transfer electrons derived from NADH and succinate to molecular oxygen, creating an electrochemical gradient over the inner membrane that drives transmembrane transport and the ATP synthase. Cytochrome c oxidase is the component of the respiratory chain that catalyzes the reduction of oxygen to water. Electrons originating from reduced cytochrome c in the intermembrane space (IMS) are transferred via the dinuclear copper A center (CU(A)) of subunit 2 and heme A of subunit 1 to the active site in subunit 1, a binuclear center (BNC) formed by heme A3 and copper B (CU(B)). The BNC reduces molecular oxygen to 2 water molecules using 4 electrons from cytochrome c in the IMS and 4 protons from the mitochondrial matrix. In Macaca fascicularis (Crab-eating macaque), this protein is Cytochrome c oxidase subunit 7C, mitochondrial (COX7C).